We begin with the raw amino-acid sequence, 426 residues long: 3',5'-cyclic-nucleotide phosphodiesterase (426 aa).

A disordered region spans residues 210–229; sequence DKEDAQHHSNSNSNSNNIWG.

Belongs to the cyclic nucleotide phosphodiesterase class-II family.

The enzyme catalyses a nucleoside 3',5'-cyclic phosphate + H2O = a nucleoside 5'-phosphate + H(+). The chain is 3',5'-cyclic-nucleotide phosphodiesterase (PDE1) from Candida albicans (Yeast).